Consider the following 243-residue polypeptide: Sugar fermentation stimulation protein homolog (243 aa).

Belongs to the SfsA family.

The polypeptide is Sugar fermentation stimulation protein homolog (Acaryochloris marina (strain MBIC 11017)).